The following is a 255-amino-acid chain: Protein YIPF7 (255 aa).

Topologically, residues 1 to 124 (MSNLGQFDSD…ADGSIMNETD (124 aa)) are cytoplasmic. The chain crosses the membrane as a helical span at residues 125–145 (LTGPILFCMALGATLLLAGKV). Gln146 is a topological domain (lumenal). The helical transmembrane segment at 147–167 (FGYVYGMSAIGCLGIHALLNL) threads the bilayer. Residues 168–180 (MSSSGVSYGCVAS) lie on the Cytoplasmic side of the membrane. Residues 181–201 (VLGYCLLPMVILSSCAIFFSL) form a helical membrane-spanning segment. Residues 202–204 (QGT) are Lumenal-facing. The helical transmembrane segment at 205-225 (FGTVSALVIIGWCSLSASKIF) threads the bilayer. At 226–234 (TSALAMEGQ) the chain is on the cytoplasmic side. Residues 235–255 (QLLIAYPCALLYGLFALVTVF) traverse the membrane as a helical segment.

This sequence belongs to the YIP1 family.

The protein localises to the endoplasmic reticulum membrane. It is found in the golgi apparatus. It localises to the cis-Golgi network membrane. Its subcellular location is the trans-Golgi network membrane. The polypeptide is Protein YIPF7 (YIPF7) (Bos taurus (Bovine)).